We begin with the raw amino-acid sequence, 497 residues long: uncharacterized protein (497 aa).

Residues D12, T13, and C52 each coordinate Ca(2+). The Nucleophile role is filled by C52. Position 52 is a 3-oxoalanine (Cys) (C52). H102 is an active-site residue. Ca(2+) is bound by residues D284 and H285.

It belongs to the sulfatase family. Ca(2+) is required as a cofactor. The conversion to 3-oxoalanine (also known as C-formylglycine, FGly), of a serine or cysteine residue in prokaryotes and of a cysteine residue in eukaryotes, is critical for catalytic activity.

This is an uncharacterized protein from Escherichia coli (strain K12).